Consider the following 306-residue polypeptide: Lipoyl synthase (306 aa).

[4Fe-4S] cluster contacts are provided by Cys-52, Cys-57, Cys-63, Cys-78, Cys-82, Cys-85, and Ser-289. Residues 64 to 278 enclose the Radical SAM core domain; it reads WNRKTATYML…KETAYKIGFK (215 aa).

It belongs to the radical SAM superfamily. Lipoyl synthase family. [4Fe-4S] cluster serves as cofactor.

Its subcellular location is the cytoplasm. The enzyme catalyses [[Fe-S] cluster scaffold protein carrying a second [4Fe-4S](2+) cluster] + N(6)-octanoyl-L-lysyl-[protein] + 2 oxidized [2Fe-2S]-[ferredoxin] + 2 S-adenosyl-L-methionine + 4 H(+) = [[Fe-S] cluster scaffold protein] + N(6)-[(R)-dihydrolipoyl]-L-lysyl-[protein] + 4 Fe(3+) + 2 hydrogen sulfide + 2 5'-deoxyadenosine + 2 L-methionine + 2 reduced [2Fe-2S]-[ferredoxin]. Its pathway is protein modification; protein lipoylation via endogenous pathway; protein N(6)-(lipoyl)lysine from octanoyl-[acyl-carrier-protein]: step 2/2. Functionally, catalyzes the radical-mediated insertion of two sulfur atoms into the C-6 and C-8 positions of the octanoyl moiety bound to the lipoyl domains of lipoate-dependent enzymes, thereby converting the octanoylated domains into lipoylated derivatives. The sequence is that of Lipoyl synthase from Leptospira biflexa serovar Patoc (strain Patoc 1 / Ames).